The chain runs to 88 residues: Early E1B 9 kDa protein (88 aa).

The interval 23-88 is disordered; sequence NMEGSQDEDN…DLFPELRRLP (66 aa). Residues 34–44 are compositionally biased toward low complexity; the sequence is RLLASAASGSS.

This chain is Early E1B 9 kDa protein, found in Homo sapiens (Human).